The chain runs to 513 residues: ATP synthase subunit alpha (513 aa).

172-179 contributes to the ATP binding site; the sequence is GDRQTGKT.

It belongs to the ATPase alpha/beta chains family. In terms of assembly, F-type ATPases have 2 components, CF(1) - the catalytic core - and CF(0) - the membrane proton channel. CF(1) has five subunits: alpha(3), beta(3), gamma(1), delta(1), epsilon(1). CF(0) has three main subunits: a(1), b(2) and c(9-12). The alpha and beta chains form an alternating ring which encloses part of the gamma chain. CF(1) is attached to CF(0) by a central stalk formed by the gamma and epsilon chains, while a peripheral stalk is formed by the delta and b chains.

The protein resides in the cell inner membrane. The enzyme catalyses ATP + H2O + 4 H(+)(in) = ADP + phosphate + 5 H(+)(out). Its function is as follows. Produces ATP from ADP in the presence of a proton gradient across the membrane. The alpha chain is a regulatory subunit. The sequence is that of ATP synthase subunit alpha from Gluconacetobacter diazotrophicus (strain ATCC 49037 / DSM 5601 / CCUG 37298 / CIP 103539 / LMG 7603 / PAl5).